Consider the following 375-residue polypeptide: Cytochrome P450 monooxygenase ACRTS1 (375 aa).

Heme is bound at residue Cys321.

The protein belongs to the cytochrome P450 family. Heme serves as cofactor.

Its pathway is mycotoxin biosynthesis. Functionally, cytochrome P450 monooxygenase; part of the gene cluster that mediates the biosynthesis of the host-selective toxins (HSTs) ACR-toxins responsible for brown spot of rough lemon disease by the rough lemon pathotype. ACR-toxins cause uncoupling of mitochondrial oxidative-phosphorylation similar to that of classic protonophore. The structure of the major form of ACR-toxin (ACR-toxin I) consists of an alpha-dihydropyrone ring in a 19-carbon polyalcohol, a typical polyketide structure. Minor toxins were characterized as having a pyrone ring with polyalcohol side chains different in length and showing weaker toxicity. The highly reducing polyketide synthase ACRTS2 has all necessary enzymatic domains for multiple cycles of condensation and beta-keto processing. The cytochrome P450 monooxygenase ACRTS1 has also been shown to be essential for ACR-toxin biosynthesis, however its exact role in the pathway has not been elucidated yet. This is Cytochrome P450 monooxygenase ACRTS1 from Alternaria alternata (Alternaria rot fungus).